Consider the following 1082-residue polypeptide: Probable arabinosyltransferase B (1082 aa).

13 helical membrane passes run 28–50 (WVAT…LPVT), 223–241 (LAAM…LALW), 262–281 (VTAV…VIGA), 333–352 (SIWI…LLLS), 359–381 (LGPA…LGAW), 420–442 (AITT…AALL), 462–481 (WPLI…VVFA), 522–544 (AISR…FMML), 557–574 (AWRL…LMFT), 578–600 (WTHH…TVLV), 613–635 (AFLS…WWYV), 650–672 (GGVQ…AFWL), and 689–711 (APIP…IGVV).

This sequence belongs to the emb family.

The protein resides in the cell membrane. In terms of biological role, arabinosyl transferase responsible for the polymerization of arabinose into the arabinan of arabinogalactan. The chain is Probable arabinosyltransferase B (embB) from Mycolicibacterium smegmatis (Mycobacterium smegmatis).